The sequence spans 449 residues: DNA-directed RNA polymerase subunit Rpo1C (449 aa).

The tract at residues methionine 1–glutamate 68 is unknown. The tract at residues aspartate 69–lysine 449 is DNA-directed RNA polymerase subunit Rpo1C.

This sequence belongs to the RNA polymerase beta' chain family. As to quaternary structure, part of the RNA polymerase complex.

It is found in the cytoplasm. It carries out the reaction RNA(n) + a ribonucleoside 5'-triphosphate = RNA(n+1) + diphosphate. Functionally, DNA-dependent RNA polymerase (RNAP) catalyzes the transcription of DNA into RNA using the four ribonucleoside triphosphates as substrates. Forms part of the jaw domain. This Methanothermobacter thermautotrophicus (strain Winter) (Methanobacterium thermoautotrophicum) protein is DNA-directed RNA polymerase subunit Rpo1C.